A 606-amino-acid chain; its full sequence is Sulfite reductase [NADPH] flavoprotein alpha-component (606 aa).

The Flavodoxin-like domain maps to 64-202; sequence VTLISASQTG…QAQQWRQQVV (139 aa). FMN is bound by residues 70 to 75, 117 to 120, and 153 to 162; these read SQTGNA, STQG, and LGDTSYEHFC. Low complexity predominate over residues 212-234; the sequence is QSTAPTQSTTPAAAAITSGGTTT. The interval 212–235 is disordered; the sequence is QSTAPTQSTTPAAAAITSGGTTTV. The 215-residue stretch at 241-455 folds into the FAD-binding FR-type domain; sequence TAPLTAQLSV…IEHNDNFRLP (215 aa). Residues threonine 329, lysine 363, 393–396, 411–413, tyrosine 417, and 426–429 contribute to the FAD site; these read RLYS, TVG, and GGAS. Residues 526-527, 532-536, and aspartate 568 each bind NADP(+); these read SR and KIYVQ. Residue tyrosine 606 coordinates FAD.

This sequence belongs to the NADPH-dependent sulphite reductase flavoprotein subunit CysJ family. It in the N-terminal section; belongs to the flavodoxin family. The protein in the C-terminal section; belongs to the flavoprotein pyridine nucleotide cytochrome reductase family. In terms of assembly, alpha(8)-beta(8). The alpha component is a flavoprotein, the beta component is a hemoprotein. FAD serves as cofactor. Requires FMN as cofactor.

The catalysed reaction is hydrogen sulfide + 3 NADP(+) + 3 H2O = sulfite + 3 NADPH + 4 H(+). Its pathway is sulfur metabolism; hydrogen sulfide biosynthesis; hydrogen sulfide from sulfite (NADPH route): step 1/1. Component of the sulfite reductase complex that catalyzes the 6-electron reduction of sulfite to sulfide. This is one of several activities required for the biosynthesis of L-cysteine from sulfate. The flavoprotein component catalyzes the electron flow from NADPH -&gt; FAD -&gt; FMN to the hemoprotein component. The sequence is that of Sulfite reductase [NADPH] flavoprotein alpha-component from Yersinia pestis bv. Antiqua (strain Antiqua).